The following is a 160-amino-acid chain: UPF0178 protein PA14_69280 (160 aa).

It belongs to the UPF0178 family.

This Pseudomonas aeruginosa (strain UCBPP-PA14) protein is UPF0178 protein PA14_69280.